Here is a 502-residue protein sequence, read N- to C-terminus: Lysine--tRNA ligase (502 aa).

Residues glutamate 413 and glutamate 420 each contribute to the Mg(2+) site.

This sequence belongs to the class-II aminoacyl-tRNA synthetase family. Homodimer. The cofactor is Mg(2+).

It is found in the cytoplasm. The catalysed reaction is tRNA(Lys) + L-lysine + ATP = L-lysyl-tRNA(Lys) + AMP + diphosphate. The protein is Lysine--tRNA ligase of Haemophilus influenzae (strain PittGG).